Reading from the N-terminus, the 691-residue chain is ATP-dependent zinc metalloprotease FtsH 2 (691 aa).

The disordered stretch occupies residues 1–48; that stretch reads MTDEPQSDEQQTTEQERPLGTKRATRADGLRRPGVRSGLAERRSPAAD. Residues 1–64 lie on the Cytoplasmic side of the membrane; that stretch reads MTDEPQSDEQ…AAVRRFLLRD (64 aa). Basic and acidic residues predominate over residues 14 to 31; sequence EQERPLGTKRATRADGLR. The chain crosses the membrane as a helical span at residues 65–85; it reads VFALGLMIAALVIVILFFTLL. Residues 86-168 are Extracellular-facing; sequence GATKPTSSGT…AVKQQPGKAQ (83 aa). Residues 169–189 traverse the membrane as a helical segment; sequence VTIVVQFLLPILLLVCLFALF. Topologically, residues 190–691 are cytoplasmic; the sequence is MRIGQDGGAG…ERGSARDRDA (502 aa). Position 265–272 (265–272) interacts with ATP; it reads GPPGTGKT. His-486 provides a ligand contact to Zn(2+). The active site involves Glu-487. The Zn(2+) site is built by His-490 and Asp-563.

It in the central section; belongs to the AAA ATPase family. The protein in the C-terminal section; belongs to the peptidase M41 family. Homohexamer. Requires Zn(2+) as cofactor.

The protein resides in the cell membrane. In terms of biological role, acts as a processive, ATP-dependent zinc metallopeptidase for both cytoplasmic and membrane proteins. Plays a role in the quality control of integral membrane proteins. The sequence is that of ATP-dependent zinc metalloprotease FtsH 2 from Conexibacter woesei (strain DSM 14684 / CCUG 47730 / CIP 108061 / JCM 11494 / NBRC 100937 / ID131577).